The sequence spans 433 residues: Inward rectifier potassium channel 18 (433 aa).

Residues 1–77 lie on the Cytoplasmic side of the membrane; sequence MTAASRANPY…LADMFTTCVD (77 aa). Residues 78–104 form a helical membrane-spanning segment; that stretch reads IRWRYMLLIFSLAFLASWLLFGVIFWV. Topologically, residues 105-129 are extracellular; that stretch reads IAVAHGDLEPAEGHGRTPCVMQVHG. Residues 130–146 constitute an intramembrane region (helical; Pore-forming); that stretch reads FMAAFLFSIETQTTIGY. Positions 143 to 148 match the Selectivity filter motif; it reads TIGYGL. Topologically, residues 147–155 are extracellular; sequence GLRCVTEEC. Residues 156 to 183 traverse the membrane as a helical segment; the sequence is LVAVFMVVAQSIVGCIIDSFMIGAIMAK. The Cytoplasmic portion of the chain corresponds to 184 to 433; that stretch reads MARPKKRAQT…QRPYRRGSEI (250 aa). Residues 387-433 are disordered; that stretch reads DEEDEADGDQDGRSRDGLSPQARHDFDRLQAGGGVLEQRPYRRGSEI. The span at 396–414 shows a compositional bias: basic and acidic residues; sequence QDGRSRDGLSPQARHDFDR.

The protein belongs to the inward rectifier-type potassium channel (TC 1.A.2.1) family. KCNJ12 subfamily. In terms of assembly, can form heteromeric channels with Kir2.1/KCNJ2. Can form heteromeric channels with Kir2.2/KCNJ12. In terms of processing, probably phosphorylated by PKC; decreases single-channel open probability. In terms of tissue distribution, specifically expressed in skeletal muscle.

It localises to the cell membrane. It is found in the endoplasmic reticulum. It catalyses the reaction K(+)(in) = K(+)(out). In terms of biological role, inward rectifier potassium channels are characterized by a greater tendency to allow potassium to flow into the cell rather than out of it. Their voltage dependence is regulated by the concentration of extracellular potassium; as external potassium is raised, the voltage range of the channel opening shifts to more positive voltages. The inward rectification is mainly due to the blockage of outward current by internal magnesium. This Homo sapiens (Human) protein is Inward rectifier potassium channel 18 (KCNJ18).